Here is a 259-residue protein sequence, read N- to C-terminus: Aspartate/glutamate leucyltransferase (259 aa).

It belongs to the R-transferase family. Bpt subfamily.

The protein localises to the cytoplasm. The enzyme catalyses N-terminal L-glutamyl-[protein] + L-leucyl-tRNA(Leu) = N-terminal L-leucyl-L-glutamyl-[protein] + tRNA(Leu) + H(+). It carries out the reaction N-terminal L-aspartyl-[protein] + L-leucyl-tRNA(Leu) = N-terminal L-leucyl-L-aspartyl-[protein] + tRNA(Leu) + H(+). Its function is as follows. Functions in the N-end rule pathway of protein degradation where it conjugates Leu from its aminoacyl-tRNA to the N-termini of proteins containing an N-terminal aspartate or glutamate. The chain is Aspartate/glutamate leucyltransferase from Rhizobium meliloti (strain 1021) (Ensifer meliloti).